Consider the following 101-residue polypeptide: A-type ATP synthase subunit K (101 aa).

3 helical membrane-spanning segments follow: residues 5 to 25 (WLPF…AQAP), 37 to 57 (IGAG…VGMA), and 75 to 95 (ILIF…FAVL).

The protein belongs to the V-ATPase proteolipid subunit family. As to quaternary structure, has multiple subunits with at least A(3), B(3), C, D, E, F, H, I and proteolipid K(x). In terms of processing, the N-terminus is blocked.

The protein resides in the cell membrane. Functionally, component of the A-type ATP synthase that produces ATP from ADP in the presence of a proton gradient across the membrane. In Sulfurisphaera tokodaii (strain DSM 16993 / JCM 10545 / NBRC 100140 / 7) (Sulfolobus tokodaii), this protein is A-type ATP synthase subunit K.